A 377-amino-acid chain; its full sequence is uncharacterized protein (377 aa).

32 to 39 provides a ligand contact to ATP; it reads GPINSGKT.

It belongs to the archaeal ATPase family.

This is an uncharacterized protein from Methanocaldococcus jannaschii (strain ATCC 43067 / DSM 2661 / JAL-1 / JCM 10045 / NBRC 100440) (Methanococcus jannaschii).